Consider the following 398-residue polypeptide: DNA polymerase IV (398 aa).

Residues I5–G187 enclose the UmuC domain. Residues D9 and D105 each contribute to the Mg(2+) site. The active site involves E106.

This sequence belongs to the DNA polymerase type-Y family. As to quaternary structure, monomer. Requires Mg(2+) as cofactor.

The protein resides in the cytoplasm. It catalyses the reaction DNA(n) + a 2'-deoxyribonucleoside 5'-triphosphate = DNA(n+1) + diphosphate. Functionally, poorly processive, error-prone DNA polymerase involved in untargeted mutagenesis. Copies undamaged DNA at stalled replication forks, which arise in vivo from mismatched or misaligned primer ends. These misaligned primers can be extended by PolIV. Exhibits no 3'-5' exonuclease (proofreading) activity. May be involved in translesional synthesis, in conjunction with the beta clamp from PolIII. In Alkaliphilus oremlandii (strain OhILAs) (Clostridium oremlandii (strain OhILAs)), this protein is DNA polymerase IV.